The following is a 386-amino-acid chain: MFPEPPTPGSPAPETPPDSSRIRQGAVPAWVLATILLGSGLLVFSSCFCLYRKRCRRRMGKKSQAQAQVHLQEVKELGRSYIDKVQPEIEELDPSPSMPGQQVLDKHQLGRLQYSLDYDFQTGQLLVGILQAEGLAALDLGGSSDPYVSVYLLPDKRRRHETKVHRQTLNPHFGETFAFKVPYVELGGRVLVMAVYDFDRFSRNDAIGEVRVPMSSVNLGRPVQAWRELQVAPKEEQEKLGDICFSLRYVPTAGKLTVIVLEAKNLKKMDVGGLSDPYVKVHLLQGGKKVRKKKTTIKKNTLNPYYNEAFSFEVPCDQVQKVQVELTVLDYDKLGKNEAIGRVAVGTAVGGAGLRHWADMLANPRRPIAQWHSLRPPDRARPIPAP.

The segment covering 1–16 has biased composition (pro residues); the sequence is MFPEPPTPGSPAPETP. The disordered stretch occupies residues 1-21; that stretch reads MFPEPPTPGSPAPETPPDSSR. Over 1–24 the chain is Vesicular; it reads MFPEPPTPGSPAPETPPDSSRIRQ. The chain crosses the membrane as a helical span at residues 25–45; that stretch reads GAVPAWVLATILLGSGLLVFS. Topologically, residues 46–386 are cytoplasmic; the sequence is SCFCLYRKRC…PDRARPIPAP (341 aa). 2 C2 domains span residues 108–227 and 239–372; these read QLGR…QAWR and KLGD…AQWH. Residues leucine 138, aspartate 139, aspartate 145, aspartate 197, phenylalanine 198, aspartate 199, serine 202, aspartate 205, aspartate 270, aspartate 276, aspartate 330, and aspartate 332 each coordinate Ca(2+).

Belongs to the synaptotagmin family. As to quaternary structure, homodimer. Interacts with both alpha- and beta-tubulin. Ca(2+) is required as a cofactor. Expressed in kidney, adipose tissue, lung and heart, as well as at higher levels in brain.

The protein resides in the cytoplasmic vesicle. It localises to the secretory vesicle. The protein localises to the synaptic vesicle membrane. Its subcellular location is the recycling endosome membrane. May be involved in Ca(2+)-dependent exocytosis of secretory vesicles through Ca(2+) and phospholipid binding to the C2 domain or may serve as Ca(2+) sensors in the process of vesicular trafficking and exocytosis. Regulates the Ca(2+)-dependent secretion of norepinephrine in PC12 cells. Required for export from the endocytic recycling compartment to the cell surface. The protein is Synaptotagmin-5 (Syt5) of Rattus norvegicus (Rat).